We begin with the raw amino-acid sequence, 372 residues long: 3 beta-hydroxysteroid dehydrogenase/Delta 5--&gt;4-isomerase type 2 (372 aa).

Tyr-154 serves as the catalytic Proton acceptor. Lys-158 is an NAD(+) binding site. The helical transmembrane segment at Leu-287 to Ile-307 threads the bilayer.

It belongs to the 3-beta-HSD family. As to expression, expressed in adrenal gland, testis and ovary.

Its subcellular location is the endoplasmic reticulum membrane. It localises to the mitochondrion membrane. It carries out the reaction a 3beta-hydroxy-Delta(5)-steroid + NAD(+) = a 3-oxo-Delta(5)-steroid + NADH + H(+). It catalyses the reaction a 3-oxo-Delta(5)-steroid = a 3-oxo-Delta(4)-steroid. The enzyme catalyses pregnenolone + NAD(+) = pregn-5-ene-3,20-dione + NADH + H(+). The catalysed reaction is pregn-5-ene-3,20-dione = progesterone. It carries out the reaction 3beta-hydroxyandrost-5-en-17-one + NAD(+) = androst-5-ene-3,17-dione + NADH + H(+). It catalyses the reaction androst-5-ene-3,17-dione = androst-4-ene-3,17-dione. Its pathway is lipid metabolism; steroid biosynthesis. Its function is as follows. 3-beta-HSD is a bifunctional enzyme, that catalyzes the oxidative conversion of Delta(5)-ene-3-beta-hydroxy steroid, and the oxidative conversion of ketosteroids. The 3-beta-HSD enzymatic system plays a crucial role in the biosynthesis of all classes of hormonal steroids. The polypeptide is 3 beta-hydroxysteroid dehydrogenase/Delta 5--&gt;4-isomerase type 2 (Homo sapiens (Human)).